The primary structure comprises 319 residues: Aspartate carbamoyltransferase catalytic subunit (319 aa).

The carbamoyl phosphate site is built by R55 and T56. K83 is a binding site for L-aspartate. The carbamoyl phosphate site is built by R105, H144, and Q147. Residues R177 and R231 each contribute to the L-aspartate site. Carbamoyl phosphate is bound by residues G272 and P273.

It belongs to the aspartate/ornithine carbamoyltransferase superfamily. ATCase family. As to quaternary structure, heterododecamer (2C3:3R2) of six catalytic PyrB chains organized as two trimers (C3), and six regulatory PyrI chains organized as three dimers (R2).

It catalyses the reaction carbamoyl phosphate + L-aspartate = N-carbamoyl-L-aspartate + phosphate + H(+). It participates in pyrimidine metabolism; UMP biosynthesis via de novo pathway; (S)-dihydroorotate from bicarbonate: step 2/3. In terms of biological role, catalyzes the condensation of carbamoyl phosphate and aspartate to form carbamoyl aspartate and inorganic phosphate, the committed step in the de novo pyrimidine nucleotide biosynthesis pathway. This chain is Aspartate carbamoyltransferase catalytic subunit, found in Nocardia farcinica (strain IFM 10152).